Reading from the N-terminus, the 909-residue chain is E3 ubiquitin-protein ligase HACE1 (909 aa).

The tract at residues 1-21 is N-terminal helix important for homodimerization; that stretch reads MERAMEQLNRLTRSLRRARTV. 7 ANK repeats span residues 23–55, 64–93, 97–126, 130–159, 163–192, 196–226, and 228–253; these read LPDDNETAVYTLMPMVMADQHRSVSELLSNSKF, VKRSLLHIAANCGSVECLVLLLKKGANPNY, SGCTPLHLAARNGQKKCMSKLLEYSADVNI, EGLTAIHWLAVNGRTELLHDLVQHVSDVDV, MGQTALHVACQNGHKTTVQCLLDSGADINR, SGATPLYFACSHGQRDTAQILLLRGAKYLSD, and NGVTPLDLCVQGGYGETCEVLIQYHP. The segment at 396–433 is disordered; that stretch reads KGQDQDGTSIPPFEPPGPGSYENLSTGTGESKPDVLGG. The 336-residue stretch at 574–909 folds into the HECT domain; that stretch reads NCAKLKQGIA…HCGSYGYTMA (336 aa). Cys876 functions as the Glycyl thioester intermediate in the catalytic mechanism.

Homodimer. The homodimer is autoinhibited and stabilized by its N-terminal helix. Interacts with RAB1 (RAB1A, RAB1B or RAB1C), RAB4 (RAB4A or RAB4B) and RAB11 (RAB11A or RAB11B); in a GTP-dependent manner. Interacts with the 26S proteasomal complex through the 20S core proteasomal subunit. Interacts with RARB. Autoubiquitinated.

Its subcellular location is the golgi apparatus. It is found in the golgi stack membrane. The protein resides in the cytoplasm. The protein localises to the endoplasmic reticulum. The enzyme catalyses S-ubiquitinyl-[E2 ubiquitin-conjugating enzyme]-L-cysteine + [acceptor protein]-L-lysine = [E2 ubiquitin-conjugating enzyme]-L-cysteine + N(6)-ubiquitinyl-[acceptor protein]-L-lysine.. Its pathway is protein modification; protein ubiquitination. Its function is as follows. E3 ubiquitin-protein ligase involved in Golgi membrane fusion and regulation of small GTPases. Acts as a regulator of Golgi membrane dynamics during the cell cycle: recruited to Golgi membrane by Rab proteins and regulates postmitotic Golgi membrane fusion. Acts by mediating ubiquitination during mitotic Golgi disassembly, ubiquitination serving as a signal for Golgi reassembly later, after cell division. Specifically binds GTP-bound RAC1, mediating ubiquitination and subsequent degradation of active RAC1, thereby playing a role in host defense against pathogens. May also act as a transcription regulator via its interaction with RARB. This is E3 ubiquitin-protein ligase HACE1 (HACE1) from Bos taurus (Bovine).